We begin with the raw amino-acid sequence, 406 residues long: S-adenosylmethionine synthase (406 aa).

ATP is bound at residue 141–146 (GQGSMD).

The protein belongs to the AdoMet synthase 2 family. In terms of assembly, homodimer. Requires Mg(2+) as cofactor.

The enzyme catalyses L-methionine + ATP + H2O = S-adenosyl-L-methionine + phosphate + diphosphate. Its pathway is amino-acid biosynthesis; S-adenosyl-L-methionine biosynthesis; S-adenosyl-L-methionine from L-methionine: step 1/1. Catalyzes the formation of S-adenosylmethionine from methionine and ATP. The polypeptide is S-adenosylmethionine synthase (mat) (Methanocaldococcus jannaschii (strain ATCC 43067 / DSM 2661 / JAL-1 / JCM 10045 / NBRC 100440) (Methanococcus jannaschii)).